A 349-amino-acid chain; its full sequence is Green-sensitive opsin-1 (349 aa).

The Extracellular segment spans residues 1 to 36 (MNGTEGKNFYVPMSNRTGLVRSPFEYPQYYLAEPWQ). Asn2 and Asn15 each carry an N-linked (GlcNAc...) asparagine glycan. A helical membrane pass occupies residues 37–61 (FKILALYLFFLMSMGLPINGLTLVV). The Cytoplasmic segment spans residues 62-73 (TAQHKKLRQPLN). The chain crosses the membrane as a helical span at residues 74–99 (FILVNLAVAGTIMVCFGFTVTFYTAI). The Extracellular segment spans residues 100–113 (NGYFVLGPTGCAVE). The cysteines at positions 110 and 187 are disulfide-linked. Residues 114 to 133 (GFMATLGGEVALWSLVVLAI) traverse the membrane as a helical segment. Residues 134 to 152 (ERYIVVCKPMGSFKFSSSH) lie on the Cytoplasmic side of the membrane. A helical transmembrane segment spans residues 153–176 (AFAGIAFTWVMALACAAPPLFGWS). Over 177 to 202 (RYIPEGMQCSCGPDYYTLNPDYNNES) the chain is Extracellular. The helical transmembrane segment at 203–230 (YVIYMFVCHFILPVAVIFFTYGRLVCTV) threads the bilayer. The Cytoplasmic portion of the chain corresponds to 231 to 252 (KAAAAQQQDSASTQKAEREVTK). A helical membrane pass occupies residues 253-276 (MVILMVFGFLIAWTPYATVAAWIF). Residues 277–284 (FNKGADFS) are Extracellular-facing. A helical transmembrane segment spans residues 285 to 309 (AKFMAIPAFFSKSSALYNPVIYVLL). Lys296 carries the N6-(retinylidene)lysine modification. Over 310-349 (NKQFRNCMLTTIFCGKNPLGDDESSTVSTSKTEVSSVSPA) the chain is Cytoplasmic. The interval 329–349 (GDDESSTVSTSKTEVSSVSPA) is disordered. The span at 334-349 (STVSTSKTEVSSVSPA) shows a compositional bias: low complexity.

It belongs to the G-protein coupled receptor 1 family. Opsin subfamily. Post-translationally, phosphorylated on some or all of the serine and threonine residues present in the C-terminal region. As to expression, the color pigments are found in the cone photoreceptor cells.

It is found in the membrane. Its function is as follows. Visual pigments are the light-absorbing molecules that mediate vision. They consist of an apoprotein, opsin, covalently linked to cis-retinal. This Carassius auratus (Goldfish) protein is Green-sensitive opsin-1.